We begin with the raw amino-acid sequence, 195 residues long: Imidazoleglycerol-phosphate dehydratase (195 aa).

Belongs to the imidazoleglycerol-phosphate dehydratase family.

It localises to the cytoplasm. The enzyme catalyses D-erythro-1-(imidazol-4-yl)glycerol 3-phosphate = 3-(imidazol-4-yl)-2-oxopropyl phosphate + H2O. It participates in amino-acid biosynthesis; L-histidine biosynthesis; L-histidine from 5-phospho-alpha-D-ribose 1-diphosphate: step 6/9. In Heliobacterium modesticaldum (strain ATCC 51547 / Ice1), this protein is Imidazoleglycerol-phosphate dehydratase.